A 159-amino-acid polypeptide reads, in one-letter code: Endoribonuclease YbeY (159 aa).

Zn(2+) is bound by residues His114, His118, and His124.

The protein belongs to the endoribonuclease YbeY family. It depends on Zn(2+) as a cofactor.

Its subcellular location is the cytoplasm. Functionally, single strand-specific metallo-endoribonuclease involved in late-stage 70S ribosome quality control and in maturation of the 3' terminus of the 16S rRNA. In Pectobacterium carotovorum subsp. carotovorum (strain PC1), this protein is Endoribonuclease YbeY.